We begin with the raw amino-acid sequence, 73 residues long: Mitofissin (73 aa).

This sequence belongs to the ?ATG44? family. As to quaternary structure, homooligomer. Found as homooctamer in solution, but binds to membranes either as a monomer, dimer, or tetramer, not as an octamer.

The protein resides in the mitochondrion intermembrane space. It localises to the vacuole. Its function is as follows. Mitochondrial fission factor that acts directly on lipid membranes to drive mitochondrial fission required for mitophagy. Directly binds to lipid membranes and brings about lipid membrane fragility to facilitate membrane fission and engulfment of mitochondria by the phagophore. The protein is Mitofissin of Saccharomyces cerevisiae (strain ATCC 204508 / S288c) (Baker's yeast).